A 532-amino-acid polypeptide reads, in one-letter code: CTP synthase (532 aa).

Residues 1 to 267 (MTKFIFVTGG…DDIVLKILGL (267 aa)) form an amidoligase domain region. Ser13 provides a ligand contact to CTP. Ser13 is a binding site for UTP. 14-19 (SLGKGI) contributes to the ATP binding site. Tyr54 provides a ligand contact to L-glutamine. Residue Asp71 participates in ATP binding. The Mg(2+) site is built by Asp71 and Glu141. CTP-binding positions include 148–150 (DIE), 188–193 (KTKPTQ), and Lys224. UTP contacts are provided by residues 188 to 193 (KTKPTQ) and Lys224. One can recognise a Glutamine amidotransferase type-1 domain in the interval 292–532 (EIAIVGKYVE…EFVKATLANR (241 aa)). Gly354 is an L-glutamine binding site. The active-site Nucleophile; for glutamine hydrolysis is Cys381. L-glutamine-binding positions include 382–385 (LGMQ), Glu405, and Arg462. Catalysis depends on residues His507 and Glu509.

It belongs to the CTP synthase family. In terms of assembly, homotetramer.

The catalysed reaction is UTP + L-glutamine + ATP + H2O = CTP + L-glutamate + ADP + phosphate + 2 H(+). The enzyme catalyses L-glutamine + H2O = L-glutamate + NH4(+). It carries out the reaction UTP + NH4(+) + ATP = CTP + ADP + phosphate + 2 H(+). The protein operates within pyrimidine metabolism; CTP biosynthesis via de novo pathway; CTP from UDP: step 2/2. With respect to regulation, allosterically activated by GTP, when glutamine is the substrate; GTP has no effect on the reaction when ammonia is the substrate. The allosteric effector GTP functions by stabilizing the protein conformation that binds the tetrahedral intermediate(s) formed during glutamine hydrolysis. Inhibited by the product CTP, via allosteric rather than competitive inhibition. Catalyzes the ATP-dependent amination of UTP to CTP with either L-glutamine or ammonia as the source of nitrogen. Regulates intracellular CTP levels through interactions with the four ribonucleotide triphosphates. This Desulfitobacterium hafniense (strain Y51) protein is CTP synthase.